Here is a 694-residue protein sequence, read N- to C-terminus: Acetyl-coenzyme A synthetase (694 aa).

The tract at residues 1–23 (MSDKRPRSPCSNNNDELNDSSVL) is disordered. The segment covering 9 to 23 (PCSNNNDELNDSSVL) has biased composition (polar residues). CoA-binding positions include 229–232 (RGKK) and threonine 347. ATP contacts are provided by residues 423 to 425 (GEP), 447 to 452 (DTYWQT), aspartate 536, and arginine 551. CoA is bound at residue serine 559. Arginine 562 lines the ATP pocket. Arginine 628 is a binding site for CoA.

It belongs to the ATP-dependent AMP-binding enzyme family.

The enzyme catalyses acetate + ATP + CoA = acetyl-CoA + AMP + diphosphate. The polypeptide is Acetyl-coenzyme A synthetase (ACS) (Cryptosporidium parvum).